Consider the following 728-residue polypeptide: Catalase-peroxidase 1 (728 aa).

The segment at residues 91–218 (WHSAGTYRTA…LAAVQMGLIY (128 aa)) is a cross-link (tryptophyl-tyrosyl-methioninium (Trp-Tyr) (with M-244)). Histidine 92 acts as the Proton acceptor in catalysis. The tryptophyl-tyrosyl-methioninium (Tyr-Met) (with W-91) cross-link spans 218-244 (YVNPEGPDGNPDPVAAARDIRDTFARM). Histidine 259 lines the heme b pocket.

The protein belongs to the peroxidase family. Peroxidase/catalase subfamily. As to quaternary structure, homodimer or homotetramer. Heme b serves as cofactor. In terms of processing, formation of the three residue Trp-Tyr-Met cross-link is important for the catalase, but not the peroxidase activity of the enzyme.

The catalysed reaction is H2O2 + AH2 = A + 2 H2O. The enzyme catalyses 2 H2O2 = O2 + 2 H2O. Its function is as follows. Bifunctional enzyme with both catalase and broad-spectrum peroxidase activity. In Burkholderia ambifaria (strain MC40-6), this protein is Catalase-peroxidase 1.